Here is a 192-residue protein sequence, read N- to C-terminus: Ion-translocating oxidoreductase complex subunit A (192 aa).

6 helical membrane-spanning segments follow: residues 5–25 (ALIL…FLGL), 39–59 (TGMG…SYLV), 65–85 (APLG…AAVV), 102–122 (VLGI…VALL), 134–154 (ALYG…FASI), and 171–191 (AIAL…IGLV).

The protein belongs to the NqrDE/RnfAE family. The complex is composed of six subunits: RnfA, RnfB, RnfC, RnfD, RnfE and RnfG.

It localises to the cell inner membrane. Part of a membrane-bound complex that couples electron transfer with translocation of ions across the membrane. The sequence is that of Ion-translocating oxidoreductase complex subunit A from Thioalkalivibrio sulfidiphilus (strain HL-EbGR7).